We begin with the raw amino-acid sequence, 343 residues long: Protein pelota homolog (343 aa).

Belongs to the eukaryotic release factor 1 family. Pelota subfamily. Monomer. A divalent metal cation serves as cofactor.

It is found in the cytoplasm. Its function is as follows. May function in recognizing stalled ribosomes, interact with stem-loop structures in stalled mRNA molecules, and effect endonucleolytic cleavage of the mRNA. May play a role in the release non-functional ribosomes and degradation of damaged mRNAs. Has endoribonuclease activity. In Cenarchaeum symbiosum (strain A), this protein is Protein pelota homolog.